The primary structure comprises 92 residues: Large ribosomal subunit protein bL27 (92 aa).

The propeptide occupies 1–8; that stretch reads MLMNLQFF. The interval 11–30 is disordered; sequence HKGGGSTANGRDSAGRRLGA.

This sequence belongs to the bacterial ribosomal protein bL27 family. The N-terminus is cleaved by ribosomal processing cysteine protease Prp.

The polypeptide is Large ribosomal subunit protein bL27 (Lactiplantibacillus plantarum (strain ATCC BAA-793 / NCIMB 8826 / WCFS1) (Lactobacillus plantarum)).